Reading from the N-terminus, the 686-residue chain is Eomesodermin homolog (686 aa).

The segment at 27 to 46 (GGSGGSAGHLPSAAPSPQKL) is disordered. The segment covering 34 to 43 (GHLPSAAPSP) has biased composition (low complexity). Position 107 is a phosphoserine (S107). Positions 276–456 (LWLKFHRHQT…HNPFAKGFRD (181 aa)) form a DNA-binding region, T-box. The required for transcription activation stretch occupies residues 571 to 686 (AMAGWGGRGS…GGYYAFYTTP (116 aa)). Residues 639–686 (ACKRRRLSPSNSSNENSPSIKCEDINAEEYSKDTSKGMGGYYAFYTTP) form a disordered region. Over residues 646–657 (SPSNSSNENSPS) the composition is skewed to low complexity. Residues 659–673 (KCEDINAEEYSKDTS) are compositionally biased toward basic and acidic residues.

In terms of tissue distribution, expressed in CD8+ T-cells.

The protein resides in the nucleus. Functionally, functions as a transcriptional activator playing a crucial role during development. Functions in trophoblast differentiation and later in gastrulation, regulating both mesoderm delamination and endoderm specification. Plays a role in brain development being required for the specification and the proliferation of the intermediate progenitor cells and their progeny in the cerebral cortex. Required for differentiation and migration of unipolar dendritic brush cells. Also involved in the differentiation of CD8+ T-cells during immune response regulating the expression of lytic effector genes. This chain is Eomesodermin homolog (EOMES), found in Homo sapiens (Human).